Reading from the N-terminus, the 282-residue chain is NH(3)-dependent NAD(+) synthetase (282 aa).

ATP is bound at residue 51-58; the sequence is GISGGVDS. Mg(2+) is bound at residue aspartate 57. Arginine 148 contributes to the deamido-NAD(+) binding site. Threonine 168 is a binding site for ATP. Glutamate 173 contributes to the Mg(2+) binding site. Deamido-NAD(+) is bound by residues lysine 181 and aspartate 188. Positions 197 and 219 each coordinate ATP. Deamido-NAD(+) is bound at residue 268–269; the sequence is HK.

It belongs to the NAD synthetase family. Homodimer.

It carries out the reaction deamido-NAD(+) + NH4(+) + ATP = AMP + diphosphate + NAD(+) + H(+). Its pathway is cofactor biosynthesis; NAD(+) biosynthesis; NAD(+) from deamido-NAD(+) (ammonia route): step 1/1. Catalyzes the ATP-dependent amidation of deamido-NAD to form NAD. Uses ammonia as a nitrogen source. The chain is NH(3)-dependent NAD(+) synthetase from Burkholderia ambifaria (strain MC40-6).